The sequence spans 521 residues: Putative FNIP repeat-containing protein L162 (521 aa).

FNIP repeat units follow at residues 179-221 and 222-263; these read FNKS…LGYK and YNYP…MGGR.

The chain is Putative FNIP repeat-containing protein L162 from Acanthamoeba polyphaga mimivirus (APMV).